We begin with the raw amino-acid sequence, 231 residues long: DNA mismatch repair protein MutH (231 aa).

This sequence belongs to the MutH family.

It is found in the cytoplasm. Sequence-specific endonuclease that cleaves unmethylated GATC sequences. It is involved in DNA mismatch repair. This Shewanella woodyi (strain ATCC 51908 / MS32) protein is DNA mismatch repair protein MutH.